Here is a 318-residue protein sequence, read N- to C-terminus: C1GALT1-specific chaperone 1 (318 aa).

Residues 1 to 6 (MLSESS) lie on the Cytoplasmic side of the membrane. The helical; Signal-anchor for type II membrane protein transmembrane segment at 7–26 (SFLKGVMLGSIFCALITMLG) threads the bilayer. The Lumenal portion of the chain corresponds to 27–318 (HIRIGHGNRM…FLPPNGSDND (292 aa)).

The protein belongs to the glycosyltransferase 31 family. Beta3-Gal-T subfamily. As to quaternary structure, associates with core 1 beta-3-galactosyltransferase (C1GALT1), probably not with the soluble active form. As to expression, ubiquitously expressed. Abundantly expressed in salivary gland, stomach, small intestine, kidney, and testis and at intermediate levels in whole brain, cerebellum, spinal cord, thymus, spleen, trachea, lung, pancreas, ovary, and uterus.

It is found in the membrane. In terms of biological role, probable chaperone required for the generation of 1 O-glycan Gal-beta1-3GalNAc-alpha1-Ser/Thr (T antigen), which is a precursor for many extended O-glycans in glycoproteins. Probably acts as a specific molecular chaperone assisting the folding/stability of core 1 beta-3-galactosyltransferase (C1GALT1). The chain is C1GALT1-specific chaperone 1 (C1GALT1C1) from Homo sapiens (Human).